The following is a 931-amino-acid chain: Bifunctional uridylyltransferase/uridylyl-removing enzyme (931 aa).

The segment at 1–383 is uridylyltransferase; the sequence is MDSVATDSKA…TTGSTWRRVP (383 aa). A uridylyl-removing region spans residues 384-739; the sequence is ESDDFIVDNN…VGFDPARGVT (356 aa). Residues 499–622 form the HD domain; sequence VDEHLIRCIG…VQSVEQMKLL (124 aa). ACT domains are found at residues 740 to 822 and 851 to 931; these read ELTI…AVAR and VIEV…QPAA.

It belongs to the GlnD family. Mg(2+) serves as cofactor.

It catalyses the reaction [protein-PII]-L-tyrosine + UTP = [protein-PII]-uridylyl-L-tyrosine + diphosphate. The enzyme catalyses [protein-PII]-uridylyl-L-tyrosine + H2O = [protein-PII]-L-tyrosine + UMP + H(+). Uridylyltransferase (UTase) activity is inhibited by glutamine, while glutamine activates uridylyl-removing (UR) activity. Functionally, modifies, by uridylylation and deuridylylation, the PII regulatory proteins (GlnB and homologs), in response to the nitrogen status of the cell that GlnD senses through the glutamine level. Under low glutamine levels, catalyzes the conversion of the PII proteins and UTP to PII-UMP and PPi, while under higher glutamine levels, GlnD hydrolyzes PII-UMP to PII and UMP (deuridylylation). Thus, controls uridylylation state and activity of the PII proteins, and plays an important role in the regulation of nitrogen fixation and metabolism. The chain is Bifunctional uridylyltransferase/uridylyl-removing enzyme from Bradyrhizobium sp. (strain ORS 278).